The primary structure comprises 383 residues: MLLSVTSRPGISTFGYNKNNKKLYVAQQMAPPSPRNSTPNSSGGGGGGSGGNDQLSKTNLYIRGLQPGTTDQDLVKLCQPYGKIVSTKAILDKTTNKCKGYGFVDFDSPSSAQKAVTALKASGVQAQMAKQQEQDPTNLYISNLPLSMDEQELEGMLKPFGQVISTRILRDTSGASRGVGFARMESTEKCEAIITHFNGKYIKTPPGVAAPSDPLLCKFADGGPKKRQSQGRYVQNGRAWPRNGDMGGMALTYDPTAALQNGFYAAPYSIAHSRMLAQSALAPYLPSPVSSYQGSVLTPGMDHPLSLQPASMMGPLTQQLGHLSLNSLGTFMPAAAAMHGAYISQYPAVPSSSVSAEESNGQQNQLAVEPPSDHGVYPFQFSK.

M1 carries the post-translational modification N-acetylmethionine. Positions 28–56 (QMAPPSPRNSTPNSSGGGGGGSGGNDQLS) are disordered. Over residues 42–51 (SGGGGGGSGG) the composition is skewed to gly residues. RRM domains lie at 58-131 (TNLY…MAKQ) and 137-222 (TNLY…FADG). Position 108 is a phosphoserine (S108). S287 carries the phosphoserine modification. A disordered region spans residues 352–383 (SSVSAEESNGQQNQLAVEPPSDHGVYPFQFSK).

The protein resides in the nucleus. This is RNA-binding motif, single-stranded-interacting protein 2 (Rbms2) from Mus musculus (Mouse).